A 343-amino-acid polypeptide reads, in one-letter code: Aspartate carbamoyltransferase catalytic subunit (343 aa).

Carbamoyl phosphate contacts are provided by R91 and T92. An L-aspartate-binding site is contributed by K119. 3 residues coordinate carbamoyl phosphate: R141, H171, and Q174. The L-aspartate site is built by R204 and R259. The carbamoyl phosphate site is built by G300 and P301.

It belongs to the aspartate/ornithine carbamoyltransferase superfamily. ATCase family. As to quaternary structure, heterododecamer (2C3:3R2) of six catalytic PyrB chains organized as two trimers (C3), and six regulatory PyrI chains organized as three dimers (R2).

The enzyme catalyses carbamoyl phosphate + L-aspartate = N-carbamoyl-L-aspartate + phosphate + H(+). It participates in pyrimidine metabolism; UMP biosynthesis via de novo pathway; (S)-dihydroorotate from bicarbonate: step 2/3. Its function is as follows. Catalyzes the condensation of carbamoyl phosphate and aspartate to form carbamoyl aspartate and inorganic phosphate, the committed step in the de novo pyrimidine nucleotide biosynthesis pathway. The sequence is that of Aspartate carbamoyltransferase catalytic subunit from Burkholderia cenocepacia (strain HI2424).